The following is a 263-amino-acid chain: Single-stranded DNA-binding protein WHY1, chloroplastic (263 aa).

The transit peptide at 1-47 (MSQLLSTPLMAVNSNPRFLSSSSVLVTGGFAVKRHGFALKPTTKTVK) directs the protein to the chloroplast. The tract at residues 89 to 94 (KGKAAL) is required for ssDNA binding. The Nuclear localization signal motif lies at 167–180 (KGKSDEGKVRKVLK).

Belongs to the Whirly family. Homotetramer.

Its subcellular location is the plastid. It localises to the chloroplast. The protein resides in the nucleus. Functionally, single-stranded DNA-binding protein that functions in both chloroplasts and nucleus. In chloroplasts, maintains plastid genome stability by preventing break-induced and short homology-dependent illegitimate recombinations. In nucleus, modulates telomere length homeostasis by inhibiting the action of the telomerase at the extreme termini of chromosomes. Is recruited to a distal element upstream of the kinesin KP1 to mediate the transcriptional repression of KP1. Is required for full salicylic acid-dependent plant disease resistance responses. Can bind double-stranded DNA in vivo. In Arabidopsis thaliana (Mouse-ear cress), this protein is Single-stranded DNA-binding protein WHY1, chloroplastic (WHY1).